The sequence spans 4011 residues: Hybrid PKS-NRPS synthetase mycA (4011 aa).

In terms of domain architecture, Ketosynthase family 3 (KS3) spans 12 to 451 (NEPIAIIGSA…GANAHVILEN (440 aa)). Residues cysteine 185, histidine 324, and histidine 373 each act as for beta-ketoacyl synthase activity in the active site. An acyl transferase (AT) domain region spans residues 576-903 (VFTGQGAQWA…PYTGTLSRGS (328 aa)). The N-terminal hotdog fold stretch occupies residues 977–1113 (NPLLGRRIPD…GRVIVTLAGT (137 aa)). The region spanning 977-1290 (NPLLGRRIPD…ITPLATRTGQ (314 aa)) is the PKS/mFAS DH domain. The interval 978-1287 (PLLGRRIPDG…GVRITPLATR (310 aa)) is dehydratase (DH) domain. Histidine 1009 serves as the catalytic Proton acceptor; for dehydratase activity. Residues 1135 to 1290 (TAEVREDEFY…ITPLATRTGQ (156 aa)) are C-terminal hotdog fold. The Proton donor; for dehydratase activity role is filled by aspartate 1195. The tract at residues 1434 to 1626 (YYVEALGIRE…FSGIDTITPE (193 aa)) is methyltransferase (MT) domain. Residues 2138 to 2311 (TYVLFGLTSD…AASVLHLGAV (174 aa)) form a ketoreductase (KR)domain region. Residues 2429 to 2504 (DSFLQKLQIM…DLVAFAHEKL (76 aa)) form the Carrier 1 domain. Serine 2464 carries the O-(pantetheine 4'-phosphoryl)serine modification. The disordered stretch occupies residues 2519–2607 (AAAAAAAERS…PREQDVERTA (89 aa)). Positions 2559–2578 (PASSSTGSDHPTSVTSSGHT) are enriched in polar residues. A condensation region spans residues 2604–2975 (ERTAPMSLGQ…KPDSTLGSAP (372 aa)). Residues 3009–3414 (IIQRNPDTIA…GELEILGRID (406 aa)) are adenylation. Residues 3525-3544 (AKEEEEEKRPNGSSAAPLTQ) are disordered. Residues 3535-3544 (NGSSAAPLTQ) are compositionally biased toward polar residues. The Carrier 2 domain maps to 3541–3621 (PLTQQELQLR…AMAAAVHDAA (81 aa)). Serine 3581 carries the O-(pantetheine 4'-phosphoryl)serine modification. The tract at residues 3671 to 3978 (VVILTGATGF…RTVPLGQWIE (308 aa)) is reductase-like.

The protein in the C-terminal section; belongs to the NRP synthetase family.

It carries out the reaction L-leucine + 8 malonyl-CoA + 4 S-adenosyl-L-methionine + ATP + 9 NADPH + 12 H(+) = (5S)-5-(2-methylpropyl)-3-[(2E,6R,8E,10E,12E)-6,8,10,12-tetramethyltetradeca-2,8,10,12-tetraenoyl]-2,5-dihydro-1H-pyrrol-2-one + AMP + 4 S-adenosyl-L-homocysteine + 8 CO2 + diphosphate + 9 NADP(+) + 8 CoA + 7 H2O. The protein operates within mycotoxin biosynthesis. In terms of biological role, hybrid PKS-NRPS synthetase; part of the gene cluster that mediates the biosynthesis of myceliothermophins, mycotoxins that contain a trans-fused decalin ring system connected to a conjugated 3-pyrrolin-2-one moiety and that have potential anti-tumor properties. The polyketide synthase module (PKS) of the PKS-NRPS mycA is responsible for the synthesis of the octaketide backbone. The downstream nonribosomal peptide synthetase (NRPS) module then amidates the carboxyl end of the octaketide with a leucine. A reductase-like domain (R) at the C-terminus catalyzes the reductive release of the polyketide-amino acid intermediate. Because mycA lacks a designated enoylreductase (ER) domain, the required activity is provided the enoyl reductase mycC. Following mycA-catalyzed construction and release of aminoacyl polyketide aldehyde, Knoevenagel condensation yields the expected ketone. This C18 keto acyclic precursor is the substrate of the Diels-Alderase mycB, that catalyzes the Diels-Alder cycloaddition to produce myceliothermophin E. A yet unknown oxygenase involved in the production of myceliothermophin A, via substitution with a hydroxyl group at the C21, has still to be identified. The polypeptide is Hybrid PKS-NRPS synthetase mycA (Thermothelomyces thermophilus (strain ATCC 42464 / BCRC 31852 / DSM 1799) (Sporotrichum thermophile)).